The primary structure comprises 369 residues: Probable dual-specificity RNA methyltransferase RlmN (369 aa).

Glu-108 acts as the Proton acceptor in catalysis. The Radical SAM core domain occupies 114–352 (YPDRATLCIS…CTVRDTKGQE (239 aa)). A disulfide bridge connects residues Cys-121 and Cys-357. 3 residues coordinate [4Fe-4S] cluster: Cys-128, Cys-132, and Cys-135. S-adenosyl-L-methionine contacts are provided by residues 178–179 (GE), Ser-212, 235–237 (SLH), and Asn-314. Residue Cys-357 is the S-methylcysteine intermediate of the active site.

This sequence belongs to the radical SAM superfamily. RlmN family. Requires [4Fe-4S] cluster as cofactor.

It localises to the cytoplasm. It carries out the reaction adenosine(2503) in 23S rRNA + 2 reduced [2Fe-2S]-[ferredoxin] + 2 S-adenosyl-L-methionine = 2-methyladenosine(2503) in 23S rRNA + 5'-deoxyadenosine + L-methionine + 2 oxidized [2Fe-2S]-[ferredoxin] + S-adenosyl-L-homocysteine. It catalyses the reaction adenosine(37) in tRNA + 2 reduced [2Fe-2S]-[ferredoxin] + 2 S-adenosyl-L-methionine = 2-methyladenosine(37) in tRNA + 5'-deoxyadenosine + L-methionine + 2 oxidized [2Fe-2S]-[ferredoxin] + S-adenosyl-L-homocysteine. In terms of biological role, specifically methylates position 2 of adenine 2503 in 23S rRNA and position 2 of adenine 37 in tRNAs. The chain is Probable dual-specificity RNA methyltransferase RlmN from Corynebacterium efficiens (strain DSM 44549 / YS-314 / AJ 12310 / JCM 11189 / NBRC 100395).